A 445-amino-acid chain; its full sequence is Putative U-box domain-containing protein 47 (445 aa).

Residues 64–137 (EVPKEFICTL…KEWCLIHNFD (74 aa)) enclose the U-box domain.

The enzyme catalyses S-ubiquitinyl-[E2 ubiquitin-conjugating enzyme]-L-cysteine + [acceptor protein]-L-lysine = [E2 ubiquitin-conjugating enzyme]-L-cysteine + N(6)-ubiquitinyl-[acceptor protein]-L-lysine.. It functions in the pathway protein modification; protein ubiquitination. In terms of biological role, functions as an E3 ubiquitin ligase. This chain is Putative U-box domain-containing protein 47 (PUB47), found in Arabidopsis thaliana (Mouse-ear cress).